Here is a 219-residue protein sequence, read N- to C-terminus: MQIHAGPASRRGRRGPLARLSGPEATCNSRPAARGRQRAAAPRMPAPERPRSRRPQSQPGPGELCVKPRKIVFADELRPREPLHPEKHPRDLGPRLNPVPDYELKYPPVTNRRDRSRYAAVFQDQYGEFSELQREVGATQAKLQQLEALLLSLPPPRSQKEARMAAHVRREFEKKRVDPGFLDKQARCNYLKGKLRHLKAQIRKFDDQQDSNSEDSVYF.

The tract at residues methionine 1–threonine 110 is disordered. Residues leucine 17 to arginine 43 are compositionally biased toward low complexity. Basic and acidic residues predominate over residues valine 72–glycine 93. The 111-residue stretch at proline 100–aspartate 210 folds into the OCEL domain.

Belongs to the ELL/occludin family.

The polypeptide is Occludin/ELL domain-containing protein 1 (Ocel1) (Mus musculus (Mouse)).